The chain runs to 366 residues: Pectinesterase A (366 aa).

The signal sequence occupies residues 1-24 (MLKTISGTLALSLIIAASVHQAQA). Substrate contacts are provided by Thr-109 and Gln-153. The active-site Proton donor is Asp-178. Cys-192 and Cys-212 are joined by a disulfide. The active-site Nucleophile is Asp-199. Residues Arg-219, Asn-226, Tyr-230, Arg-267, Trp-269, and Thr-272 each coordinate substrate.

This sequence belongs to the pectinesterase family. In terms of assembly, monomer.

The protein localises to the secreted. It catalyses the reaction [(1-&gt;4)-alpha-D-galacturonosyl methyl ester](n) + n H2O = [(1-&gt;4)-alpha-D-galacturonosyl](n) + n methanol + n H(+). It participates in glycan metabolism; pectin degradation; 2-dehydro-3-deoxy-D-gluconate from pectin: step 1/5. Its function is as follows. Catalyzes the first step in maceration and soft-rotting of plant tissue. This Dickeya dadantii (strain 3937) (Erwinia chrysanthemi (strain 3937)) protein is Pectinesterase A.